The sequence spans 60 residues: Large ribosomal subunit protein uL30 (60 aa).

Belongs to the universal ribosomal protein uL30 family. As to quaternary structure, part of the 50S ribosomal subunit.

The chain is Large ribosomal subunit protein uL30 from Verminephrobacter eiseniae (strain EF01-2).